Consider the following 695-residue polypeptide: Nicastrin (695 aa).

A signal peptide spans 1–22 (MEMRLNAASIWLLILSYGATIA). Residues 23 to 654 (QGERTRDKMY…IFLRPSNVHQ (632 aa)) lie on the Extracellular side of the membrane. N-linked (GlcNAc...) asparagine glycosylation is found at Asn45, Asn108, Asn116, Asn138, Asn381, Asn461, Asn489, Asn585, and Asn609. The helical transmembrane segment at 655-675 (VTTLSVGIVVLIISFCLVYII) threads the bilayer. At 676–695 (SSRSEVLFEDLPASNAALFG) the chain is on the cytoplasmic side.

It belongs to the nicastrin family. As to quaternary structure, component of the gamma-secretase complex, a complex composed of a presenilin (Psn) homodimer, nicastrin (Nct), Aph-1 and Pen-2.

The protein localises to the membrane. Functionally, essential subunit of the gamma-secretase complex, an endoprotease complex that catalyzes the intramembrane cleavage of integral membrane proteins such as Notch. It probably represents a stabilizing cofactor required for the assembly of the gamma-secretase complex. In Drosophila melanogaster (Fruit fly), this protein is Nicastrin.